Reading from the N-terminus, the 270-residue chain is 5'-nucleotidase SurE (270 aa).

A divalent metal cation-binding residues include Asp14, Asp15, Ser46, and Asn104.

It belongs to the SurE nucleotidase family. Requires a divalent metal cation as cofactor.

The protein localises to the cytoplasm. It carries out the reaction a ribonucleoside 5'-phosphate + H2O = a ribonucleoside + phosphate. Its function is as follows. Nucleotidase that shows phosphatase activity on nucleoside 5'-monophosphates. This chain is 5'-nucleotidase SurE, found in Microcystis aeruginosa (strain NIES-843 / IAM M-2473).